The sequence spans 682 residues: MCREADLSEALEAGGCDLETVRNIIQGRPVPCDLRTKVWKIALNVSGKGDSLASWDGSLDLQEQPLIHRDCQNLIDRLSVAEERKTALLEDIESVVTFYCKSRNVKYQEDASWIHLLNPLVGLQLPRSDLYNCFYAIMNKYIPRDCNRKGKPFHLFRLLLQYHEPELCSFLDTKKITPDLYALNWFGSLFAFHCSVEVTQAIWDNYLQQADPFFMYFLMLIMLVNSKETVLGQDMDDKEELIKCLENTPSSLEVEDIEDLFSLAQYYYSKTPASFRKDHQSLFGSSLIAFKDDTDLSQALCLAVSVSEILQANQQQGDGVRFFVVDCRPAEQYNSGHLSTAFHLDSDLMLQNPGEFALSVKSLLEAQKQSIESGSIAGGEHLCFMGSGRDEEDMYINMVLAHFLQKNKEYISIAKGGFMALQQHLADFNMENGYGHWIVSTSGSHSSISMYADGDSAVAADDGKGMKSLVNKMTVAFKTKSVNVKDKVISFIENTATPVDRITFNIPWPERASLERHVSSSDRVGKPYRGVKPVFSIGDEEEYDTDEVDSSSMSDDDRKEIVNVQTWINKPDVKHHFPCDEVKDNGHRFPSHLLVTATHMYCLREILSKKGFAYIQSRQALSTVVKITSKKKHPELITFKYGSSNASGVEISAVERYLIPNAGDATKAIKQQIMKVLDALES.

The Rab-GAP TBC domain occupies 29-210; sequence PVPCDLRTKV…AIWDNYLQQA (182 aa). A Rhodanese domain is found at 318–426; it reads DGVRFFVVDC…GFMALQQHLA (109 aa).

It is found in the golgi apparatus. Its subcellular location is the trans-Golgi network. The protein localises to the cytoplasmic vesicle. Putative Rab GTPase-activating protein which plays a role in vesicular trafficking. Involved in endosome-to-Golgi trafficking. Acts as a bridging protein by binding simultaneously to golgins, located at the trans-Golgi, and to the WASH complex, located on endosome-derived vesicles. Plays a role in brain development. May act as a general inhibitor of innate immunity signaling. This is TBC1 domain family member 23 (tbc1d23) from Xenopus laevis (African clawed frog).